A 511-amino-acid polypeptide reads, in one-letter code: Probable dolichyl pyrophosphate Glc1Man9GlcNAc2 alpha-1,3-glucosyltransferase (511 aa).

The next 11 membrane-spanning stretches (helical) occupy residues Leu4 to His24, Val94 to Val112, Asp124 to Val144, Tyr151 to Phe171, Val210 to Val230, Pro300 to Val320, Leu332 to Val352, Ala356 to Val370, Tyr377 to Phe394, Trp432 to Leu452, and Tyr469 to Gly491.

Belongs to the ALG6/ALG8 glucosyltransferase family.

The protein resides in the endoplasmic reticulum membrane. The catalysed reaction is an alpha-D-Glc-(1-&gt;3)-alpha-D-Man-(1-&gt;2)-alpha-D-Man-(1-&gt;2)-alpha-D-Man-(1-&gt;3)-[alpha-D-Man-(1-&gt;2)-alpha-D-Man-(1-&gt;3)-[alpha-D-Man-(1-&gt;2)-alpha-D-Man-(1-&gt;6)]-alpha-D-Man-(1-&gt;6)]-beta-D-Man-(1-&gt;4)-beta-D-GlcNAc-(1-&gt;4)-alpha-D-GlcNAc-diphospho-di-trans,poly-cis-dolichol + a di-trans,poly-cis-dolichyl beta-D-glucosyl phosphate = an alpha-D-Glc-(1-&gt;3)-alpha-D-Glc-(1-&gt;3)-alpha-D-Man-(1-&gt;2)-alpha-D-Man-(1-&gt;2)-alpha-D-Man-(1-&gt;3)-[alpha-D-Man-(1-&gt;2)-alpha-D-Man-(1-&gt;3)-[alpha-D-Man-(1-&gt;2)-alpha-D-Man-(1-&gt;6)]-alpha-D-Man-(1-&gt;6)]-beta-D-Man-(1-&gt;4)-beta-D-GlcNAc-(1-&gt;4)-alpha-D-GlcNAc-diphospho-di-trans,poly-cis-dolichol + a di-trans,poly-cis-dolichyl phosphate + H(+). It functions in the pathway protein modification; protein glycosylation. In terms of biological role, adds the second glucose residue to the lipid-linked oligosaccharide precursor for N-linked glycosylation. Transfers glucose from dolichyl phosphate glucose (Dol-P-Glc) onto the lipid-linked oligosaccharide Glc(1)Man(9)GlcNAc(2)-PP-Dol. Functions in developmental processes such as germband extension, the apical constriction of mesoderm precursor cells and ventral furrow formation in early embryogenesis prior to gastrulation. Involved in the glycosylation and intracellular distribution of shg (E-cadherin). Function in cell intercalation in the lateral epidermis during germband extension may be due to its effect on shg. The protein is Probable dolichyl pyrophosphate Glc1Man9GlcNAc2 alpha-1,3-glucosyltransferase of Drosophila melanogaster (Fruit fly).